The sequence spans 102 residues: Putative peripheral benzodiazepine receptor-related protein (102 aa).

Ubiquitous.

The protein is Putative peripheral benzodiazepine receptor-related protein (TSPO) of Homo sapiens (Human).